Reading from the N-terminus, the 510-residue chain is P-(S)-hydroxymandelonitrile lyase (510 aa).

Residues 1 to 34 form the signal peptide; the sequence is MAVFISSSGSPGRATATTTTTTTLLLAVLAAAAA. Residue 116–118 participates in substrate binding; it reads NGG. Intrachain disulfides connect Cys-121/Cys-377, Cys-277/Cys-289, and Cys-313/Cys-344. Residue Asn-172 is glycosylated (N-linked (GlcNAc...) asparagine). 212 to 213 provides a ligand contact to substrate; sequence ES. The active site involves Ser-213. Asn-365 carries an N-linked (GlcNAc...) asparagine glycan. Residues Asp-414 and His-469 contribute to the active site. 465 to 469 serves as a coordination point for substrate; the sequence is SGAGH.

The protein belongs to the peptidase S10 family. Heterotetramer of two A and two B chains. The A and B chains are linked by a disulfide bond. Post-translationally, the N-terminus of chain A is blocked. In terms of tissue distribution, primary leaves of seedlings.

It catalyses the reaction (S)-4-hydroxymandelonitrile = 4-hydroxybenzaldehyde + hydrogen cyanide. Functionally, involved in cyanogenesis, the release of HCN from injured tissues. Is involved in the catabolism of the cyanogenic glycoside dhurrin. The chain is P-(S)-hydroxymandelonitrile lyase from Sorghum bicolor (Sorghum).